A 237-amino-acid polypeptide reads, in one-letter code: Ribosomal RNA small subunit methyltransferase G (237 aa).

Residues Gly-78, Phe-83, 129–130 (AE), and Arg-148 contribute to the S-adenosyl-L-methionine site.

The protein belongs to the methyltransferase superfamily. RNA methyltransferase RsmG family.

It localises to the cytoplasm. Its function is as follows. Specifically methylates the N7 position of a guanine in 16S rRNA. This is Ribosomal RNA small subunit methyltransferase G from Streptococcus equi subsp. zooepidemicus (strain MGCS10565).